The chain runs to 134 residues: Interferon-induced transmembrane protein 5 (134 aa).

Residues 1–20 (MDTSYPREDPRAPSSRKADA) show a composition bias toward basic and acidic residues. A disordered region spans residues 1 to 31 (MDTSYPREDPRAPSSRKADAAAHTALSMGTP). At 1 to 39 (MDTSYPREDPRAPSSRKADAAAHTALSMGTPGPTPRDHM) the chain is on the extracellular side. Residues 40 to 60 (LWSVFSTMYLNLCCLGFLALV) traverse the membrane as a helical segment. S-palmitoyl cysteine attachment occurs at residues Cys52, Cys53, and Cys86. Residues 61–88 (HSVKARDQKMAGNLEAARQYGSKAKCYN) lie on the Cytoplasmic side of the membrane. Residues 89 to 109 (ILAAMWTLVPPLLLLGLVVTG) form a helical membrane-spanning segment. Over 110 to 134 (ALHLSKLAKDSAAFFSTKFDEEDYN) the chain is Extracellular.

The protein belongs to the CD225/Dispanin family. As to quaternary structure, interacts with FKBP11. Post-translationally, palmitoylated. In terms of tissue distribution, detected in embryonic bone (at protein level). Highly expressed in osteoblasts of adults and embryos. Expressed in primitive hemopoietic cells.

Its subcellular location is the cell membrane. Required for normal bone mineralization. In Mus musculus (Mouse), this protein is Interferon-induced transmembrane protein 5 (Ifitm5).